Consider the following 763-residue polypeptide: Phosphoglycerol transferase I (763 aa).

4 helical membrane passes run 4 to 19, 26 to 48, 76 to 98, and 105 to 127; these read LLSF…IYAW, WWFA…LFAS, YILP…GWIL, and PHHF…ASPA.

Belongs to the OpgB family.

It is found in the cell inner membrane. The catalysed reaction is a phosphatidylglycerol + a membrane-derived-oligosaccharide D-glucose = a 1,2-diacyl-sn-glycerol + a membrane-derived-oligosaccharide 6-(glycerophospho)-D-glucose.. The protein operates within glycan metabolism; osmoregulated periplasmic glucan (OPG) biosynthesis. Its function is as follows. Transfers a phosphoglycerol residue from phosphatidylglycerol to the membrane-bound nascent glucan backbones. The sequence is that of Phosphoglycerol transferase I from Shigella flexneri.